We begin with the raw amino-acid sequence, 430 residues long: GTPase Obg (430 aa).

The Obg domain maps to 1–158 (MFVDQVKISL…LEVTLELKLL (158 aa)). The disordered stretch occupies residues 118–145 (RGGRGGRGNSRFATPRNPAPDFSENGEP). In terms of domain architecture, OBG-type G spans 159-329 (ADVGLVGFPS…LLYQIADKLE (171 aa)). GTP is bound by residues 165–172 (GFPSVGKS), 190–194 (FTTIK), 212–215 (DLPG), 282–285 (NKMD), and 310–312 (STI). Mg(2+) contacts are provided by Ser-172 and Thr-192. The OCT domain occupies 352–430 (KHTPSADKFT…ILGGEFEFVE (79 aa)).

The protein belongs to the TRAFAC class OBG-HflX-like GTPase superfamily. OBG GTPase family. In terms of assembly, monomer. The cofactor is Mg(2+).

Its subcellular location is the cytoplasm. Functionally, an essential GTPase which binds GTP, GDP and possibly (p)ppGpp with moderate affinity, with high nucleotide exchange rates and a fairly low GTP hydrolysis rate. Plays a role in control of the cell cycle, stress response, ribosome biogenesis and in those bacteria that undergo differentiation, in morphogenesis control. This chain is GTPase Obg, found in Staphylococcus epidermidis (strain ATCC 12228 / FDA PCI 1200).